The sequence spans 172 residues: Large ribosomal subunit protein uL10 (172 aa).

It belongs to the universal ribosomal protein uL10 family. Part of the ribosomal stalk of the 50S ribosomal subunit. The N-terminus interacts with L11 and the large rRNA to form the base of the stalk. The C-terminus forms an elongated spine to which L12 dimers bind in a sequential fashion forming a multimeric L10(L12)X complex.

Its function is as follows. Forms part of the ribosomal stalk, playing a central role in the interaction of the ribosome with GTP-bound translation factors. The polypeptide is Large ribosomal subunit protein uL10 (rplJ) (Liberibacter africanus (Citrus greening disease)).